The primary structure comprises 427 residues: Trigger factor (427 aa).

The 86-residue stretch at glycine 163–proline 248 folds into the PPIase FKBP-type domain.

This sequence belongs to the FKBP-type PPIase family. Tig subfamily.

It is found in the cytoplasm. It catalyses the reaction [protein]-peptidylproline (omega=180) = [protein]-peptidylproline (omega=0). In terms of biological role, involved in protein export. Acts as a chaperone by maintaining the newly synthesized protein in an open conformation. Functions as a peptidyl-prolyl cis-trans isomerase. The protein is Trigger factor of Streptococcus pneumoniae serotype 2 (strain D39 / NCTC 7466).